A 143-amino-acid chain; its full sequence is Large ribosomal subunit protein uL13c (143 aa).

The protein belongs to the universal ribosomal protein uL13 family. Part of the 50S ribosomal subunit.

Its subcellular location is the plastid. The protein localises to the chloroplast. The sequence is that of Large ribosomal subunit protein uL13c from Guillardia theta (Cryptophyte).